The sequence spans 180 residues: Inosine/xanthosine triphosphatase (180 aa).

Substrate is bound at residue 8–13 (TTNPAK). Asp38 serves as a coordination point for Mg(2+).

Belongs to the YjjX NTPase family. As to quaternary structure, homodimer. Mg(2+) is required as a cofactor. It depends on Mn(2+) as a cofactor.

The enzyme catalyses XTP + H2O = XDP + phosphate + H(+). It carries out the reaction ITP + H2O = IDP + phosphate + H(+). Phosphatase that hydrolyzes non-canonical purine nucleotides such as XTP and ITP to their respective diphosphate derivatives. Probably excludes non-canonical purines from DNA/RNA precursor pool, thus preventing their incorporation into DNA/RNA and avoiding chromosomal lesions. The sequence is that of Inosine/xanthosine triphosphatase from Yersinia pseudotuberculosis serotype O:1b (strain IP 31758).